The chain runs to 498 residues: MIKINFNWRTFYLLTIVFRFVFTLSDSYIHPDEHFQSLEVLTNRILNYSTNIPWEFQDDPARSLAPLYFIYGPLLYFIKFFKLNLTALQIWYIARLQISILSWIITDFCLYWMLPSKPERIKAIFFTSTSYITLVYQNHLFSNSIETLLLLVTILLIDDLRYVQESKDQDVQNLNKNKNLFYTGVLISLGIFNRITFPAFLILPGWFVMKYVLKHYVSGLYLVMGFFSTTALLILVDTILFGNINNVVAEPFNVSSYIIAPLNNLLYNARYENLAQHGIHPYYTHILVNMPQILGPGLIFFVSKSYTKTTPFLTVISGLLFLSVIPHQELRFLIPLLPLACCSFDFTLKWVQPWMLYTWYIFNIFMSILMGKLHQGGVVPVLDHIKSEASVQVWWRTYTPPSWILGSNSTETTHLGEKLNDNKFINIVDCMGADSKEVQQILQTISTNKPVYLITPIASFKHFDESRFSPVWNYTFHLDLDHLDFADIQPGLGVYQLL.

The chain crosses the membrane as a helical span at residues 11 to 31 (FYLLTIVFRFVFTLSDSYIHP). Residue N47 is glycosylated (N-linked (GlcNAc...) asparagine). Residues 63–83 (SLAPLYFIYGPLLYFIKFFKL) form a helical membrane-spanning segment. An N-linked (GlcNAc...) asparagine glycan is attached at N84. 9 consecutive transmembrane segments (helical) span residues 96-116 (LQIS…MLPS), 140-160 (LFSN…IDDL), 189-209 (LGIF…WFVM), 222-242 (LVMG…ILFG), 247-267 (VVAE…NLLY), 282-302 (YYTH…IFFV), 310-330 (TPFL…HQEL), 332-348 (FLIP…DFTL), and 350-370 (WVQP…SILM). N408 and N473 each carry an N-linked (GlcNAc...) asparagine glycan.

Belongs to the glycosyltransferase 22 family. PIGZ subfamily.

The protein resides in the endoplasmic reticulum membrane. It functions in the pathway glycolipid biosynthesis; glycosylphosphatidylinositol-anchor biosynthesis. Functionally, alpha-1,2-mannosyltransferase involved in glycosylphosphatidylinositol-anchor biosynthesis. Transfers a fourth mannose to trimannosyl-GPIs during GPI precursor assembly. The presence of a fourth mannose in GPI is essential in fungi. The sequence is that of GPI mannosyltransferase 4 (SMP3) from Candida albicans (strain SC5314 / ATCC MYA-2876) (Yeast).